We begin with the raw amino-acid sequence, 164 residues long: Protein-export protein SecB (164 aa).

This sequence belongs to the SecB family. Homotetramer, a dimer of dimers. One homotetramer interacts with 1 SecA dimer.

The protein localises to the cytoplasm. Its function is as follows. One of the proteins required for the normal export of preproteins out of the cell cytoplasm. It is a molecular chaperone that binds to a subset of precursor proteins, maintaining them in a translocation-competent state. It also specifically binds to its receptor SecA. The sequence is that of Protein-export protein SecB from Burkholderia orbicola (strain MC0-3).